We begin with the raw amino-acid sequence, 279 residues long: Putative Delta(7)-sterol-C5(6)-desaturase 2 (279 aa).

The next 2 membrane-spanning stretches (helical) occupy residues 48-68 and 127-147; these read LAGN…IYYL and FLCF…IYWV. In terms of domain architecture, Fatty acid hydroxylase spans 134–263; the sequence is ALYLVLVEFM…TIWMDWMFGS (130 aa). The Histidine box-1 signature appears at 148-152; that stretch reads HKELH. The Histidine box-2 signature appears at 162 to 166; the sequence is HATHH. Residues 194–214 form a helical membrane-spanning segment; sequence HVIALFIVPIHLITHLSLLFL. Positions 239–243 match the Histidine box-3 motif; sequence HTIHH.

Belongs to the sterol desaturase family. The cofactor is Fe cation.

It localises to the endoplasmic reticulum membrane. It catalyses the reaction a Delta(7)-sterol + 2 Fe(II)-[cytochrome b5] + O2 + 2 H(+) = a Delta(5),Delta(7)-sterol + 2 Fe(III)-[cytochrome b5] + 2 H2O. The protein is Putative Delta(7)-sterol-C5(6)-desaturase 2 (HDF7) of Arabidopsis thaliana (Mouse-ear cress).